Reading from the N-terminus, the 45-residue chain is Large ribosomal subunit protein bL34c (45 aa).

Residues 1-10 are compositionally biased toward polar residues; the sequence is MSKGFSNGTN. The disordered stretch occupies residues 1–45; sequence MSKGFSNGTNIKRVRKSGFRARMSNSSGRKILNSRRRKQRKKIAL. Positions 32–45 are enriched in basic residues; sequence LNSRRRKQRKKIAL.

This sequence belongs to the bacterial ribosomal protein bL34 family.

The protein localises to the plastid. The protein resides in the chloroplast. This is Large ribosomal subunit protein bL34c from Gracilaria tenuistipitata var. liui (Red alga).